The sequence spans 136 residues: Urease subunit beta (136 aa).

Residues 113–136 (NDEYAGVFGDNGAENVNKKGGKRS) are disordered.

It belongs to the urease beta subunit family. In terms of assembly, heterotrimer of UreA (gamma), UreB (beta) and UreC (alpha) subunits. Three heterotrimers associate to form the active enzyme.

It localises to the cytoplasm. It carries out the reaction urea + 2 H2O + H(+) = hydrogencarbonate + 2 NH4(+). It participates in nitrogen metabolism; urea degradation; CO(2) and NH(3) from urea (urease route): step 1/1. This is Urease subunit beta from Staphylococcus aureus (strain USA300).